A 149-amino-acid chain; its full sequence is Protegrin-1 (149 aa).

Residues 1–29 (METQRASLCLGRWSLWLLLLALVVPSASA) form the signal peptide. Residues 30–130 (QALSYREAVL…DITCNEVQGV (101 aa)) constitute a propeptide that is removed on maturation. The tract at residues 61-80 (DQPPKADEDPGTPKPVSFTV) is disordered. Intrachain disulfides connect Cys85–Cys96, Cys107–Cys124, Cys136–Cys145, and Cys138–Cys143. The residue at position 148 (Arg148) is an Arginine amide.

The protein belongs to the cathelicidin family.

The protein resides in the secreted. In terms of biological role, microbicidal activity. Active against E.coli, Listeria monocytogenes and C.albicans, in vitro. The sequence is that of Protegrin-1 (NPG1) from Sus scrofa (Pig).